The chain runs to 486 residues: N-succinylglutamate 5-semialdehyde dehydrogenase (486 aa).

220–225 (GSSRTG) contacts NAD(+). Active-site residues include glutamate 243 and cysteine 277.

Belongs to the aldehyde dehydrogenase family. AstD subfamily.

It catalyses the reaction N-succinyl-L-glutamate 5-semialdehyde + NAD(+) + H2O = N-succinyl-L-glutamate + NADH + 2 H(+). Its pathway is amino-acid degradation; L-arginine degradation via AST pathway; L-glutamate and succinate from L-arginine: step 4/5. Functionally, catalyzes the NAD-dependent reduction of succinylglutamate semialdehyde into succinylglutamate. This chain is N-succinylglutamate 5-semialdehyde dehydrogenase, found in Shewanella baltica (strain OS155 / ATCC BAA-1091).